The following is a 238-amino-acid chain: Purine nucleoside phosphorylase DeoD-type (238 aa).

H4 provides a ligand contact to a purine D-ribonucleoside. Phosphate is bound by residues G20, R24, R43, and 87-90 (RIGS). A purine D-ribonucleoside-binding positions include 181–183 (EME) and 205–206 (SD). The active-site Proton donor is D206.

Belongs to the PNP/UDP phosphorylase family. Homohexamer; trimer of homodimers.

It carries out the reaction a purine D-ribonucleoside + phosphate = a purine nucleobase + alpha-D-ribose 1-phosphate. It catalyses the reaction a purine 2'-deoxy-D-ribonucleoside + phosphate = a purine nucleobase + 2-deoxy-alpha-D-ribose 1-phosphate. In terms of biological role, catalyzes the reversible phosphorolytic breakdown of the N-glycosidic bond in the beta-(deoxy)ribonucleoside molecules, with the formation of the corresponding free purine bases and pentose-1-phosphate. The protein is Purine nucleoside phosphorylase DeoD-type of Mycoplasma genitalium (strain ATCC 33530 / DSM 19775 / NCTC 10195 / G37) (Mycoplasmoides genitalium).